The primary structure comprises 316 residues: CRISPR-associated endonuclease Cas1 (316 aa).

Mn(2+)-binding residues include E143, H206, and E221.

It belongs to the CRISPR-associated endonuclease Cas1 family. Homodimer, forms a heterotetramer with a Cas2 homodimer. Mg(2+) is required as a cofactor. The cofactor is Mn(2+).

CRISPR (clustered regularly interspaced short palindromic repeat), is an adaptive immune system that provides protection against mobile genetic elements (viruses, transposable elements and conjugative plasmids). CRISPR clusters contain spacers, sequences complementary to antecedent mobile elements, and target invading nucleic acids. CRISPR clusters are transcribed and processed into CRISPR RNA (crRNA). Acts as a dsDNA endonuclease. Involved in the integration of spacer DNA into the CRISPR cassette. This Aquifex aeolicus (strain VF5) protein is CRISPR-associated endonuclease Cas1.